The chain runs to 393 residues: tRNA(Met) cytidine acetate ligase (393 aa).

Gly81, Asn142, and Arg167 together coordinate ATP.

It belongs to the TmcAL family.

It is found in the cytoplasm. The enzyme catalyses cytidine(34) in elongator tRNA(Met) + acetate + ATP = N(4)-acetylcytidine(34) in elongator tRNA(Met) + AMP + diphosphate. Its function is as follows. Catalyzes the formation of N(4)-acetylcytidine (ac(4)C) at the wobble position of elongator tRNA(Met), using acetate and ATP as substrates. First activates an acetate ion to form acetyladenylate (Ac-AMP) and then transfers the acetyl group to tRNA to form ac(4)C34. This is tRNA(Met) cytidine acetate ligase from Bacillus cereus (strain ZK / E33L).